The primary structure comprises 118 residues: Transcription factor PAR1 (118 aa).

Residues 1–58 form a disordered region; it reads MEETLATPDATRRSLSPSCSATVKSRAAGFERRTKRRLSETNASVREDREEAEEEEDE. Polar residues predominate over residues 13–23; it reads RSLSPSCSATV. A bHLH domain is found at 43-92; the sequence is ASVREDREEAEEEEDEVKEKIEALQRIIPGGAALGVDALFEETAGYILSL.

This sequence belongs to the bHLH protein family. Homodimer.

It localises to the nucleus. Atypical bHLH transcription factor that acts as a negative regulator of a variety of shade avoidance syndrome (SAS) responses, including seedling elongation and photosynthetic pigment accumulation. Acts as a direct transcriptional repressor of two auxin-responsive genes, SAUR15 and SAUR68. May function in integrating shade and hormone transcriptional networks in response to light and auxin changes. This Arabidopsis thaliana (Mouse-ear cress) protein is Transcription factor PAR1 (PAR1).